The sequence spans 424 residues: Glutamyl-tRNA reductase (424 aa).

Substrate contacts are provided by residues 53–56, S111, 116–118, and Q122; these read TCNR and EPQ. Residue C54 is the Nucleophile of the active site. Position 191 to 196 (191 to 196) interacts with NADP(+); the sequence is GAGEMI.

Belongs to the glutamyl-tRNA reductase family. As to quaternary structure, homodimer.

The catalysed reaction is (S)-4-amino-5-oxopentanoate + tRNA(Glu) + NADP(+) = L-glutamyl-tRNA(Glu) + NADPH + H(+). The protein operates within porphyrin-containing compound metabolism; protoporphyrin-IX biosynthesis; 5-aminolevulinate from L-glutamyl-tRNA(Glu): step 1/2. In terms of biological role, catalyzes the NADPH-dependent reduction of glutamyl-tRNA(Glu) to glutamate 1-semialdehyde (GSA). In Bordetella avium (strain 197N), this protein is Glutamyl-tRNA reductase.